The primary structure comprises 1488 residues: Chromosome partition protein MukB (1488 aa).

34-41 (GGNGAGKS) is a binding site for ATP. 3 coiled-coil regions span residues 326–418 (LEAD…QYNQ), 444–472 (LDTF…QTAH), and 509–602 (RHLA…QRAP). The tract at residues 666-783 (PGGAEDQRLN…SLPIFGRAAR (118 aa)) is flexible hinge. 3 coiled-coil regions span residues 835 to 923 (EAEI…AKLE), 977 to 1116 (EMLS…AKAG), and 1209 to 1265 (VEAI…LQSV). The tract at residues 1049–1074 (ADSGAEERARQRRDELHAQLSNNRSR) is disordered. Over residues 1051 to 1065 (SGAEERARQRRDELH) the composition is skewed to basic and acidic residues.

This sequence belongs to the SMC family. MukB subfamily. As to quaternary structure, homodimerization via its hinge domain. Binds to DNA via its C-terminal region. Interacts, and probably forms a ternary complex, with MukE and MukF via its C-terminal region. The complex formation is stimulated by calcium or magnesium. Interacts with tubulin-related protein FtsZ.

The protein resides in the cytoplasm. It localises to the nucleoid. Functionally, plays a central role in chromosome condensation, segregation and cell cycle progression. Functions as a homodimer, which is essential for chromosome partition. Involved in negative DNA supercoiling in vivo, and by this means organize and compact chromosomes. May achieve or facilitate chromosome segregation by condensation DNA from both sides of a centrally located replisome during cell division. This chain is Chromosome partition protein MukB, found in Salmonella typhimurium (strain LT2 / SGSC1412 / ATCC 700720).